The primary structure comprises 245 residues: Octopine transport system permease protein OccM (245 aa).

The next 5 helical transmembrane spans lie at 12–32 (FVAL…SVAL), 57–77 (FYIF…IYYG), 96–116 (AYWC…AEIM), 163–183 (ILMV…ITGI), and 204–224 (IYLI…WALW). The 198-residue stretch at 19–216 (IPLALQLAVF…ILNFIVARLF (198 aa)) folds into the ABC transmembrane type-1 domain.

Belongs to the binding-protein-dependent transport system permease family. HisMQ subfamily.

It is found in the cell inner membrane. In terms of biological role, component of the octopine active transport system probably consisting of four subunits: Q, M, P and T. This Rhizobium radiobacter (Agrobacterium tumefaciens) protein is Octopine transport system permease protein OccM (occM).